Here is a 306-residue protein sequence, read N- to C-terminus: Polyadenylate-binding protein 2 (306 aa).

Residues 1 to 12 (MAAAAAAAAAAG) show a composition bias toward low complexity. A disordered region spans residues 1 to 115 (MAAAAAAAAA…EGDPGDGAIE (115 aa)). Residue Ala-2 is modified to N-acetylalanine. Positions 2 to 145 (AAAAAAAAAA…LKELQNEVEK (144 aa)) are interaction with SKIP. Residue Arg-17 is modified to Omega-N-methylarginine. Phosphoserine is present on Ser-19. Gly residues predominate over residues 30–47 (GAGGEAGEGAPGGAGDYG). A compositionally biased stretch (acidic residues) spans 51 to 72 (ESEELEPEELLLEPEPEPEPEE). The residue at position 52 (Ser-52) is a Phosphoserine. Pro residues predominate over residues 77 to 87 (PRAPPGAPGPG). Positions 115-151 (EDPELEAIKARVREMEEEAEKLKELQNEVEKQMNMSP) form a coiled coil. Residues 119 to 147 (LEAIKARVREMEEEAEKLKELQNEVEKQM) form a stimulates PAPOLA region. Phosphoserine is present on residues Ser-150 and Ser-235. A necessary for homooligomerization region spans residues 155–306 (NAGPVIMSIE…ARATSWYSPY (152 aa)). The 78-residue stretch at 172–249 (RSIYVGNVDY…RQIKVIPKRT (78 aa)) folds into the RRM domain. Asymmetric dimethylarginine; alternate is present on residues Arg-238, Arg-259, and Arg-263. Omega-N-methylarginine; alternate is present on residues Arg-238, Arg-259, and Arg-263. Arg-265, Arg-267, Arg-269, Arg-277, Arg-279, Arg-287, Arg-289, Arg-291, Arg-294, Arg-296, and Arg-298 each carry asymmetric dimethylarginine. The segment at 286–306 (SRPRGRVYRGRARATSWYSPY) is interaction with PAPOLA.

As to quaternary structure, monomer and homooligomer. Binds RNA as a monomer and oligomerizes when bound to poly(A). Associates in a ternary complex with CPSF4 and NS/NS1 and interaction with NS/NS1, blocks nuclear export of host cell mRNAs. Associates in a single complex with SKIP and MYOD1 and interacts with SKIP in differentiated myocytes. Interacts with NUDT21/CPSF5. Identified in a IGF2BP1-dependent mRNP granule complex containing untranslated mRNAs. Interacts with PAPOLA, but only in presence of oligo(A) RNA. Interacts with transportin. May interact with SETX. Interacts (via RRM domain and C-terminal arginine-rich region) with ZFP36 (via hypophosphorylated form); this interaction occurs in the nucleus in a RNA-independent manner, decreases in presence of single-stranded poly(A) RNA-oligomer and in a p38-dependent-manner and may down-regulated RNA poly(A) polymerase activity. Component of the poly(A) tail exosome targeting (PAXT) complex composed of PABPN1, ZFC3H1 and MTREX. Interacts with ZFC3H1 in a RNase-insensitive manner. Interacts with FRG1. Interacts with ZC3H11A. Arginine dimethylation is asymmetric and involves PRMT1 and PRMT3. It does not influence the RNA binding properties. As to expression, ubiquitous.

It is found in the nucleus. Its subcellular location is the cytoplasm. It localises to the nucleus speckle. Functionally, involved in the 3'-end formation of mRNA precursors (pre-mRNA) by the addition of a poly(A) tail of 200-250 nt to the upstream cleavage product. Stimulates poly(A) polymerase (PAPOLA) conferring processivity on the poly(A) tail elongation reaction and also controls the poly(A) tail length. Increases the affinity of poly(A) polymerase for RNA. Is also present at various stages of mRNA metabolism including nucleocytoplasmic trafficking and nonsense-mediated decay (NMD) of mRNA. Cooperates with SKIP to synergistically activate E-box-mediated transcription through MYOD1 and may regulate the expression of muscle-specific genes. Binds to poly(A) and to poly(G) with high affinity. May protect the poly(A) tail from degradation. Subunit of the trimeric poly(A) tail exosome targeting (PAXT) complex, a complex that directs a subset of long and polyadenylated poly(A) RNAs for exosomal degradation. The RNA exosome is fundamental for the degradation of RNA in eukaryotic nuclei. Substrate targeting is facilitated by its cofactor MTREX, which links to RNA-binding protein adapters. This is Polyadenylate-binding protein 2 (PABPN1) from Bos taurus (Bovine).